Consider the following 820-residue polypeptide: Mediator of RNA polymerase II transcription subunit 16 (820 aa).

WD repeat units follow at residues 74–114 (SNKY…SEWK), 621–665 (RSFM…PVFS), and 757–811 (SNDN…KCRC).

The protein belongs to the Mediator complex subunit 16 family. As to quaternary structure, component of the Mediator complex.

It is found in the nucleus. In terms of biological role, component of the Mediator complex, a coactivator involved in the regulated transcription of nearly all RNA polymerase II-dependent genes. Mediator functions as a bridge to convey information from gene-specific regulatory proteins to the basal RNA polymerase II transcription machinery. Mediator is recruited to promoters by direct interactions with regulatory proteins and serves as a scaffold for the assembly of a functional preinitiation complex with RNA polymerase II and the general transcription factors. The sequence is that of Mediator of RNA polymerase II transcription subunit 16 (MED16) from Aedes aegypti (Yellowfever mosquito).